The sequence spans 72 residues: Osmotically-inducible lipoprotein B (72 aa).

The N-terminal stretch at 1 to 23 (MFMTSKKMAAAVLAITVAMSLSA) is a signal peptide. C24 carries the N-palmitoyl cysteine lipid modification. C24 is lipidated: S-diacylglycerol cysteine.

The protein localises to the cell membrane. Provides resistance to osmotic stress. May be important for stationary-phase survival. In Salmonella typhimurium (strain LT2 / SGSC1412 / ATCC 700720), this protein is Osmotically-inducible lipoprotein B (osmB).